Here is a 430-residue protein sequence, read N- to C-terminus: RNA pseudouridine synthase 2, chloroplastic (430 aa).

The transit peptide at 1–43 (MLSISQLPSFSLTTAKSLRYPSSPSSSLSIFFSFFPKVSNFVR) directs the protein to the chloroplast. One can recognise an S4 RNA-binding domain in the interval 82–155 (IRLDSWISSR…IPLDIVYEDK (74 aa)). The disordered stretch occupies residues 195 to 222 (SNSEEDDDSDEETFSDDEEMTTSPSSYA). Over residues 196 to 214 (NSEEDDDSDEETFSDDEEM) the composition is skewed to acidic residues. Aspartate 234 is a catalytic residue.

Belongs to the pseudouridine synthase RluA family.

Its subcellular location is the plastid. It localises to the chloroplast. The catalysed reaction is a uridine in RNA = a pseudouridine in RNA. This Arabidopsis thaliana (Mouse-ear cress) protein is RNA pseudouridine synthase 2, chloroplastic.